We begin with the raw amino-acid sequence, 387 residues long: MGCAYSCCLEVCCGEDEIVYPRMPGESTVCHREREKPITYHWYHWHPGHIYPRVASMEDYDEDLVQEASSEDVLGVHMVDKDTERDIEMKRQLRRLRELHLYSTWKKYQEAMKTSLGVPQCERDEGSLGKPLCPPEILSETLPGSVKKRVCFPSEDHLEEFIAEHLPEASNQSLLTVAHADTGIQTNGDLEDLEEHGPGQTVSEEATEVHMMEGDPDTLAELLIRDVLQELSSYNGEEEDPEEVKTSLGVPQRGDLEDLEEHVPGQTVSEEATGVHMMQVDPATPAKSDLEDLEEHVPGQTVSEEATGVHMMQVDPATLAKQLEDSTITGSHQQMSASPSSAPAEEATEKTKVEEEVKTRKPKKKTRKPSKKSRWNVLKCWDIFNIF.

Disordered stretches follow at residues 233 to 256 and 327 to 374; these read SYNGEEEDPEEVKTSLGVPQRGDL and TITG…KKSR. Low complexity predominate over residues 336–345; the sequence is SASPSSAPAE. Residues 347–359 are compositionally biased toward basic and acidic residues; it reads ATEKTKVEEEVKT. Basic residues predominate over residues 360–374; it reads RKPKKKTRKPSKKSR.

It belongs to the FAM153 family.

The chain is Protein FAM153B (FAM153B) from Homo sapiens (Human).